We begin with the raw amino-acid sequence, 490 residues long: Cytochrome P450 2C29 (490 aa).

The N-terminal stretch at 1-25 is a signal peptide; the sequence is MDLVVFLALTLSCLILLSLWRQSSG. 3 positions are modified to N6-acetyllysine: K249, K252, and K375. C435 is a heme binding site.

This sequence belongs to the cytochrome P450 family. The cofactor is heme. In terms of tissue distribution, expressed in liver as well as in extrahepatic tissues including brain, kidney, lung, heart, and intestine.

Its subcellular location is the endoplasmic reticulum membrane. It is found in the microsome membrane. It catalyses the reaction an organic molecule + reduced [NADPH--hemoprotein reductase] + O2 = an alcohol + oxidized [NADPH--hemoprotein reductase] + H2O + H(+). The enzyme catalyses (5Z,8Z,11Z,14Z)-eicosatetraenoate + reduced [NADPH--hemoprotein reductase] + O2 = 14,15-epoxy-(5Z,8Z,11Z)-eicosatrienoate + oxidized [NADPH--hemoprotein reductase] + H2O + H(+). It participates in lipid metabolism; arachidonate metabolism. Functionally, a cytochrome P450 monooxygenase that selectively catalyzes the epoxidation of 14,15 double bond of (5Z,8Z,11Z,14Z)-eicosatetraenoic acid (arachidonate) forming 14,15-epoxyeicosatrienoic acid (14,15-EET) regioisomer. Mechanistically, uses molecular oxygen inserting one oxygen atom into a substrate, and reducing the second into a water molecule, with two electrons provided by NADPH via cytochrome P450 reductase (CPR; NADPH--hemoprotein reductase). The sequence is that of Cytochrome P450 2C29 from Mus musculus (Mouse).